Here is a 228-residue protein sequence, read N- to C-terminus: Flagellar L-ring protein (228 aa).

The first 17 residues, 1–17, serve as a signal peptide directing secretion; sequence MHYLRYFAIAFLLLLSS. Residue cysteine 18 is the site of N-palmitoyl cysteine attachment. Residue cysteine 18 is the site of S-diacylglycerol cysteine attachment.

Belongs to the FlgH family. The basal body constitutes a major portion of the flagellar organelle and consists of four rings (L,P,S, and M) mounted on a central rod.

It is found in the cell membrane. Its subcellular location is the bacterial flagellum basal body. Its function is as follows. Assembles around the rod to form the L-ring and probably protects the motor/basal body from shearing forces during rotation. This chain is Flagellar L-ring protein, found in Wigglesworthia glossinidia brevipalpis.